We begin with the raw amino-acid sequence, 261 residues long: uncharacterized protein (261 aa).

NADP(+) is bound by residues Ile-33, Asp-78, and Asn-105. Catalysis depends on Ser-157, which acts as the Proton donor. Tyr-172, Lys-176, and Ser-206 together coordinate NADP(+). The Proton acceptor role is filled by Tyr-172. Lys-176 functions as the Lowers pKa of active site Tyr in the catalytic mechanism.

It belongs to the short-chain dehydrogenases/reductases (SDR) family.

The protein localises to the cytoplasm. It localises to the nucleus. This is an uncharacterized protein from Schizosaccharomyces pombe (strain 972 / ATCC 24843) (Fission yeast).